A 1642-amino-acid polypeptide reads, in one-letter code: Coiled-coil domain-containing protein 7A (1642 aa).

The tract at residues 21-51 (PYKKGLLNSSPKPKEKHNAKSKYGKNESMVL) is disordered. An LRR 1 repeat occupies 161–184 (VNQMEEISKDQSNLEELQSDGKTA). Residues 279-330 (LEKALNDQQTIESKYKQLETDFQMLIMEKTLLEAEIRRLREIERVKSAAKEE) adopt a coiled-coil conformation. An LRR 2 repeat occupies 1310–1333 (IKELSKTLNLDGGDIELSDFVFKT).

Exclusively expressed in the testes.

In Mus musculus (Mouse), this protein is Coiled-coil domain-containing protein 7A.